Here is a 301-residue protein sequence, read N- to C-terminus: NADH-cytochrome b5 reductase 3 (301 aa).

The N-myristoyl glycine moiety is linked to residue G2. One can recognise an FAD-binding FR-type domain in the interval 40–152; sequence DIKYPLRLID…RGPNGLLVYQ (113 aa). K42 bears the N6-acetyllysine mark. Phosphotyrosine is present on Y43. The residue at position 50 (K50) is an N6-acetyllysine. FAD is bound by residues R92, P93, Y94, V109, K111, and F114. K120 bears the N6-acetyllysine mark. FAD contacts are provided by K126, M127, S128, and T185.

This sequence belongs to the flavoprotein pyridine nucleotide cytochrome reductase family. Component of a complex composed of cytochrome b5, NADH-cytochrome b5 reductase (CYB5R3) and MTARC2. Interacts with MTLN; the interaction is required to maintain cellular lipid composition and leads to stimulation of mitochondrial respiratory complex I activity. The cofactor is FAD.

It is found in the endoplasmic reticulum membrane. It localises to the mitochondrion outer membrane. It catalyses the reaction 2 Fe(III)-[cytochrome b5] + NADH = 2 Fe(II)-[cytochrome b5] + NAD(+) + H(+). Functionally, catalyzes the reduction of two molecules of cytochrome b5 using NADH as the electron donor. The chain is NADH-cytochrome b5 reductase 3 from Mus musculus (Mouse).